The sequence spans 109 residues: Larval cuticle protein 1 (109 aa).

Positions 1–14 (MILVALALVALAVA) are cleaved as a signal peptide. The Chitin-binding type R&amp;R domain occupies 34-107 (EGSYQFGFET…AEGSSIPKPA (74 aa)).

In terms of biological role, component of the cuticle of the larva of Helicoverpa armigera. In Helicoverpa armigera (Cotton bollworm), this protein is Larval cuticle protein 1 (LCP1).